The sequence spans 693 residues: Heat shock protein homolog SSE1 (693 aa).

A disordered region spans residues 665–693 (LAEKLAAQRKAESEKKESKADAEGDVELD). A compositionally biased stretch (basic and acidic residues) spans 673 to 686 (RKAESEKKESKADA).

The protein belongs to the heat shock protein 70 family.

Its subcellular location is the cytoplasm. This is Heat shock protein homolog SSE1 (SSE1) from Lachancea kluyveri (strain ATCC 58438 / CBS 3082 / BCRC 21498 / NBRC 1685 / JCM 7257 / NCYC 543 / NRRL Y-12651) (Yeast).